The following is a 437-amino-acid chain: Probable inactive DNA (cytosine-5)-methyltransferase DRM1B (437 aa).

UBA domains are found at residues 20–60 (SAPS…LLQL) and 120–164 (EMSE…IYAP). An SAM-dependent MTase DRM-type domain is found at 243-437 (VHRNLPDHAL…LIQLHTTSLC (195 aa)).

This sequence belongs to the class I-like SAM-binding methyltransferase superfamily. DRM-methyltransferase family.

The protein localises to the nucleus. Its function is as follows. Involved in de novo DNA methylation. Involved in RNA-directed DNA methylation (RdDM). This Oryza sativa subsp. japonica (Rice) protein is Probable inactive DNA (cytosine-5)-methyltransferase DRM1B.